A 159-amino-acid chain; its full sequence is Style cell-cycle inhibitor 1 (159 aa).

The segment at 1-86 (MVSERSSKEK…SDHKLKEGIP (86 aa)) is disordered. Positions 15–50 (ARSEDSSSSDYEEKVKRHRGTEKDDERRSRRSDKKD) are enriched in basic and acidic residues. Over residues 51–63 (KKSHKHHKSSTSK) the composition is skewed to basic residues. A compositionally biased stretch (basic and acidic residues) spans 64–85 (KSKDDKPKKKHTESDHKLKEGI).

The protein resides in the nucleus. Functionally, component of the auxin signaling transduction pathway that regulates cell proliferation and differentiation during flowers stigmas and styles development. Involved in the regulation of auxin-related genes. The polypeptide is Style cell-cycle inhibitor 1 (Arabidopsis thaliana (Mouse-ear cress)).